Here is a 337-residue protein sequence, read N- to C-terminus: Ketol-acid reductoisomerase (NADP(+)) (337 aa).

The KARI N-terminal Rossmann domain maps to Leu-3–Thr-183. NADP(+)-binding positions include Tyr-26 to Gln-29, Lys-49, Ser-52, Ser-54, and Asp-84 to Gln-87. Residue His-109 is part of the active site. Gly-135 is a binding site for NADP(+). One can recognise a KARI C-terminal knotted domain in the interval Thr-184 to Val-329. 4 residues coordinate Mg(2+): Asp-192, Glu-196, Glu-228, and Glu-232. Ser-253 is a substrate binding site.

It belongs to the ketol-acid reductoisomerase family. Requires Mg(2+) as cofactor.

It catalyses the reaction (2R)-2,3-dihydroxy-3-methylbutanoate + NADP(+) = (2S)-2-acetolactate + NADPH + H(+). The catalysed reaction is (2R,3R)-2,3-dihydroxy-3-methylpentanoate + NADP(+) = (S)-2-ethyl-2-hydroxy-3-oxobutanoate + NADPH + H(+). It participates in amino-acid biosynthesis; L-isoleucine biosynthesis; L-isoleucine from 2-oxobutanoate: step 2/4. Its pathway is amino-acid biosynthesis; L-valine biosynthesis; L-valine from pyruvate: step 2/4. In terms of biological role, involved in the biosynthesis of branched-chain amino acids (BCAA). Catalyzes an alkyl-migration followed by a ketol-acid reduction of (S)-2-acetolactate (S2AL) to yield (R)-2,3-dihydroxy-isovalerate. In the isomerase reaction, S2AL is rearranged via a Mg-dependent methyl migration to produce 3-hydroxy-3-methyl-2-ketobutyrate (HMKB). In the reductase reaction, this 2-ketoacid undergoes a metal-dependent reduction by NADPH to yield (R)-2,3-dihydroxy-isovalerate. The protein is Ketol-acid reductoisomerase (NADP(+)) of Mycobacterium bovis (strain BCG / Pasteur 1173P2).